Consider the following 154-residue polypeptide: Large ribosomal subunit protein uL15 (154 aa).

A compositionally biased stretch (basic and acidic residues) spans 1–13; the sequence is MKLNELRDHEGAT. Positions 1-44 are disordered; it reads MKLNELRDHEGATKNRKRIGRGIGSGTGKTGGCGVKGQKSRSGV. The span at 21-35 shows a compositional bias: gly residues; the sequence is RGIGSGTGKTGGCGV.

The protein belongs to the universal ribosomal protein uL15 family. As to quaternary structure, part of the 50S ribosomal subunit.

Its function is as follows. Binds to the 23S rRNA. This Bartonella bacilliformis (strain ATCC 35685 / KC583 / Herrer 020/F12,63) protein is Large ribosomal subunit protein uL15.